Here is a 147-residue protein sequence, read N- to C-terminus: uncharacterized protein (147 aa).

2 helical membrane passes run 35–55 (TIQLAGWISVLFMLGYNFGNH) and 62–82 (IWLLVITALLVIGLLIHLFEP).

Has been detected in a cytochrome bc1-aa3 supercomplex; its deletion however leaves complex activity unaffected.

It localises to the cell membrane. This is an uncharacterized protein from Corynebacterium glutamicum (strain ATCC 13032 / DSM 20300 / JCM 1318 / BCRC 11384 / CCUG 27702 / LMG 3730 / NBRC 12168 / NCIMB 10025 / NRRL B-2784 / 534).